The following is a 149-amino-acid chain: Calmodulin (149 aa).

EF-hand domains are found at residues 8 to 43 (EQIAEFKEAFSLFDKDGDGTITTKELGTVMRSLGQN), 44 to 79 (PTEAELQDMINEVDADGNGTIDFPEFLTMMARKMKD), 81 to 116 (DSEEEILEAFKVFDKDGNGFISAAELRHIMTNLGEK), and 117 to 149 (LTDEEVDEMIREADIDGDGQINYEEFVKMMMSK). Residues Asp21, Asp23, Asp25, Thr27, Glu32, Asp57, Asp59, Asn61, Thr63, Glu68, Asp94, Asp96, Asn98, Glu105, Asp130, Asp132, Asp134, Gln136, and Glu141 each coordinate Ca(2+).

Belongs to the calmodulin family.

In terms of biological role, calmodulin mediates the control of a large number of enzymes, ion channels and other proteins by Ca(2+). Among the enzymes to be stimulated by the calmodulin-Ca(2+) complex are a number of protein kinases and phosphatases. This Globisporangium splendens (Leaf rot fungus) protein is Calmodulin.